Here is a 457-residue protein sequence, read N- to C-terminus: Multidrug resistance protein MdtK (457 aa).

The next 12 membrane-spanning stretches (helical) occupy residues 11–31 (LLAL…MGFV), 53–73 (IWLP…PVIA), 93–113 (WLAG…GYII), 127–147 (AVGY…FQVA), 160–180 (GMVM…IFIY), 188–208 (LGGI…FIAM), 243–263 (LPIA…ALLV), 276–296 (IALN…AAVT), 314–334 (AART…IFTV), 350–370 (VVAL…SDSI), 387–407 (IFFI…YILA), and 418–438 (PAGF…LMML).

This sequence belongs to the multi antimicrobial extrusion (MATE) (TC 2.A.66.1) family. MdtK subfamily.

It is found in the cell inner membrane. In terms of biological role, multidrug efflux pump that functions probably as a Na(+)/drug antiporter. The protein is Multidrug resistance protein MdtK of Salmonella heidelberg (strain SL476).